The sequence spans 339 residues: Holliday junction branch migration complex subunit RuvB (339 aa).

Residues 2-187 (KDVNEEERII…FGIIEHMQYY (186 aa)) are large ATPase domain (RuvB-L). Residues Leu26, Arg27, Gly68, Lys71, Thr72, Thr73, 134–136 (EDF), Arg177, Tyr187, and Arg224 contribute to the ATP site. Thr72 contacts Mg(2+). The interval 188 to 258 (SVEDLEKIIQ…TTKHSLHLLE (71 aa)) is small ATPAse domain (RuvB-S). The interval 261-339 (DEGLDQTDRK…QLGYPPKDEK (79 aa)) is head domain (RuvB-H). DNA contacts are provided by Arg316 and Arg321.

This sequence belongs to the RuvB family. As to quaternary structure, homohexamer. Forms an RuvA(8)-RuvB(12)-Holliday junction (HJ) complex. HJ DNA is sandwiched between 2 RuvA tetramers; dsDNA enters through RuvA and exits via RuvB. An RuvB hexamer assembles on each DNA strand where it exits the tetramer. Each RuvB hexamer is contacted by two RuvA subunits (via domain III) on 2 adjacent RuvB subunits; this complex drives branch migration. In the full resolvosome a probable DNA-RuvA(4)-RuvB(12)-RuvC(2) complex forms which resolves the HJ.

The protein localises to the cytoplasm. The catalysed reaction is ATP + H2O = ADP + phosphate + H(+). Functionally, the RuvA-RuvB-RuvC complex processes Holliday junction (HJ) DNA during genetic recombination and DNA repair, while the RuvA-RuvB complex plays an important role in the rescue of blocked DNA replication forks via replication fork reversal (RFR). RuvA specifically binds to HJ cruciform DNA, conferring on it an open structure. The RuvB hexamer acts as an ATP-dependent pump, pulling dsDNA into and through the RuvAB complex. RuvB forms 2 homohexamers on either side of HJ DNA bound by 1 or 2 RuvA tetramers; 4 subunits per hexamer contact DNA at a time. Coordinated motions by a converter formed by DNA-disengaged RuvB subunits stimulates ATP hydrolysis and nucleotide exchange. Immobilization of the converter enables RuvB to convert the ATP-contained energy into a lever motion, pulling 2 nucleotides of DNA out of the RuvA tetramer per ATP hydrolyzed, thus driving DNA branch migration. The RuvB motors rotate together with the DNA substrate, which together with the progressing nucleotide cycle form the mechanistic basis for DNA recombination by continuous HJ branch migration. Branch migration allows RuvC to scan DNA until it finds its consensus sequence, where it cleaves and resolves cruciform DNA. This chain is Holliday junction branch migration complex subunit RuvB, found in Lactobacillus johnsonii (strain CNCM I-12250 / La1 / NCC 533).